A 159-amino-acid chain; its full sequence is S-ribosylhomocysteine lyase (159 aa).

Fe cation contacts are provided by His53, His57, and Cys124.

The protein belongs to the LuxS family. In terms of assembly, homodimer. The cofactor is Fe cation.

The enzyme catalyses S-(5-deoxy-D-ribos-5-yl)-L-homocysteine = (S)-4,5-dihydroxypentane-2,3-dione + L-homocysteine. Its function is as follows. Involved in the synthesis of autoinducer 2 (AI-2) which is secreted by bacteria and is used to communicate both the cell density and the metabolic potential of the environment. The regulation of gene expression in response to changes in cell density is called quorum sensing. Catalyzes the transformation of S-ribosylhomocysteine (RHC) to homocysteine (HC) and 4,5-dihydroxy-2,3-pentadione (DPD). This chain is S-ribosylhomocysteine lyase, found in Clostridium beijerinckii (strain ATCC 51743 / NCIMB 8052) (Clostridium acetobutylicum).